Consider the following 205-residue polypeptide: DNA-directed RNA polymerase subunit 5 (205 aa).

It belongs to the archaeal Rpo5/eukaryotic RPB5 RNA polymerase subunit family.

Its subcellular location is the virion. It carries out the reaction RNA(n) + a ribonucleoside 5'-triphosphate = RNA(n+1) + diphosphate. Functionally, DNA-dependent RNA polymerase catalyzes the transcription of DNA into RNA using the four ribonucleoside triphosphates as substrates. The chain is DNA-directed RNA polymerase subunit 5 from Acanthamoeba polyphaga (Amoeba).